Reading from the N-terminus, the 546-residue chain is DNA ligase (546 aa).

Position 244 (glutamate 244) interacts with ATP. The active-site N6-AMP-lysine intermediate is lysine 246. ATP-binding residues include arginine 251, arginine 266, glutamate 295, phenylalanine 334, arginine 405, and lysine 411.

This sequence belongs to the ATP-dependent DNA ligase family. Mg(2+) is required as a cofactor.

The enzyme catalyses ATP + (deoxyribonucleotide)n-3'-hydroxyl + 5'-phospho-(deoxyribonucleotide)m = (deoxyribonucleotide)n+m + AMP + diphosphate.. In terms of biological role, DNA ligase that seals nicks in double-stranded DNA during DNA replication, DNA recombination and DNA repair. In Methanocorpusculum labreanum (strain ATCC 43576 / DSM 4855 / Z), this protein is DNA ligase.